The chain runs to 193 residues: 3-isopropylmalate dehydratase small subunit (193 aa).

The protein belongs to the LeuD family. LeuD type 1 subfamily. As to quaternary structure, heterodimer of LeuC and LeuD.

It carries out the reaction (2R,3S)-3-isopropylmalate = (2S)-2-isopropylmalate. Its pathway is amino-acid biosynthesis; L-leucine biosynthesis; L-leucine from 3-methyl-2-oxobutanoate: step 2/4. Its function is as follows. Catalyzes the isomerization between 2-isopropylmalate and 3-isopropylmalate, via the formation of 2-isopropylmaleate. In Bacillus cereus (strain B4264), this protein is 3-isopropylmalate dehydratase small subunit.